A 364-amino-acid polypeptide reads, in one-letter code: tRNA-specific 2-thiouridylase MnmA (364 aa).

ATP-binding positions include 12 to 19 (GMSGGVDS) and Met38. The interval 98–100 (NPD) is interaction with target base in tRNA. Cys103 (nucleophile) is an active-site residue. Cys103 and Cys199 are disulfide-bonded. Gly127 is a binding site for ATP. Residues 149 to 151 (KDQ) are interaction with tRNA. The active-site Cysteine persulfide intermediate is the Cys199. The interval 307–308 (RY) is interaction with tRNA.

Belongs to the MnmA/TRMU family.

It localises to the cytoplasm. The catalysed reaction is S-sulfanyl-L-cysteinyl-[protein] + uridine(34) in tRNA + AH2 + ATP = 2-thiouridine(34) in tRNA + L-cysteinyl-[protein] + A + AMP + diphosphate + H(+). In terms of biological role, catalyzes the 2-thiolation of uridine at the wobble position (U34) of tRNA, leading to the formation of s(2)U34. In Shouchella clausii (strain KSM-K16) (Alkalihalobacillus clausii), this protein is tRNA-specific 2-thiouridylase MnmA.